A 328-amino-acid chain; its full sequence is 2,3-diketo-L-gulonate-binding periplasmic protein YiaO (328 aa).

A signal peptide spans 1-24 (MKLRSVTYALFIAGLAAFSTSSLA).

As to quaternary structure, the complex comprises the extracytoplasmic solute receptor protein YiaO, and the two transmembrane proteins YiaM and YiaN.

Its subcellular location is the periplasm. Functionally, part of the tripartite ATP-independent periplasmic (TRAP) transport system YiaMNO involved in the uptake of 2,3-diketo-L-gulonate. This protein specifically binds 2,3-diketo-L-gulonate. Is not able to bind either L-ascorbate or dehydroascorbate. The chain is 2,3-diketo-L-gulonate-binding periplasmic protein YiaO (yiaO) from Escherichia coli (strain K12).